A 66-amino-acid chain; its full sequence is Large ribosomal subunit protein uL29 (66 aa).

The protein belongs to the universal ribosomal protein uL29 family.

The polypeptide is Large ribosomal subunit protein uL29 (Rhizobium rhizogenes (strain K84 / ATCC BAA-868) (Agrobacterium radiobacter)).